Here is a 482-residue protein sequence, read N- to C-terminus: ATP synthase subunit beta (482 aa).

162 to 169 (GGAGVGKT) provides a ligand contact to ATP.

It belongs to the ATPase alpha/beta chains family. F-type ATPases have 2 components, CF(1) - the catalytic core - and CF(0) - the membrane proton channel. CF(1) has five subunits: alpha(3), beta(3), gamma(1), delta(1), epsilon(1). CF(0) has four main subunits: a(1), b(1), b'(1) and c(9-12).

The protein localises to the cellular thylakoid membrane. It catalyses the reaction ATP + H2O + 4 H(+)(in) = ADP + phosphate + 5 H(+)(out). Produces ATP from ADP in the presence of a proton gradient across the membrane. The catalytic sites are hosted primarily by the beta subunits. In Nostoc punctiforme (strain ATCC 29133 / PCC 73102), this protein is ATP synthase subunit beta.